Here is a 559-residue protein sequence, read N- to C-terminus: MARTTSQLYDAVPIQSSVVLCSCPSPSMVRSQTEPGSSPGIPSGVSRQGSTMDGTTAEARPSTNPLQQHPAQLPPQPRKKRPEDFKFGKILGEGSFSTVVLARELATSREYAIKILEKRHIIKENKVPYVTRERDVMSRLDHPFFVKLYFTFQDDEKLYFGLSYAKNGELLKYIRKIGSFDETCTRFYTAEIVSALEYLHGKGIIHRDLKPENILLNEDMHIQITDFGTAKVLSPESKQARANSFVGTAQYVSPELLTEKSACKSSDLWALGCIIYQLVAGLPPFRAGNEYLIFQKIIKLEYHFPEKFFPKARDLVEKLLVLDATKRLGCEEMEGYGPLKAHPFFETITWENLHQQTPPKLTAYLPAMSEDDEDCYGNYDNLLSQFGFMQVSSSSSSHSLSTVETSLPQRSGSNIEQYIHDLDTNSFELDLQFSEDEKRLLLEKQAGGNPWHQFVENNLILKMGPVDKRKGLFARRRQLLLTEGPHLYYVDPVNKVLKGEIPWSQELRPEAKNFKTFFVHTPNRTYYLMDPSGNAHKWCRKIQEVWRQQYQSNPDAAVQ.

Phosphotyrosine; by SRC and INSR is present on Tyr-9. A Phosphoserine modification is found at Ser-25. The disordered stretch occupies residues 25 to 83; that stretch reads SPSMVRSQTEPGSSPGIPSGVSRQGSTMDGTTAEARPSTNPLQQHPAQLPPQPRKKRPE. Over residues 35-44 the composition is skewed to low complexity; that stretch reads PGSSPGIPSG. Residues 45–54 show a composition bias toward polar residues; sequence VSRQGSTMDG. Residues 85–345 enclose the Protein kinase domain; it reads FKFGKILGEG…YGPLKAHPFF (261 aa). ATP contacts are provided by residues 95 to 97 and Lys-114; that span reads SFS. The segment at 116-160 is PIF-pocket; sequence LEKRHIIKENKVPYVTRERDVMSRLDHPFFVKLYFTFQDDEKLYF. Residues 163–165 and Glu-169 each bind ATP; that span reads SYA. Catalysis depends on Asp-208, which acts as the Proton acceptor. 2 residues coordinate ATP: Glu-212 and Asp-226. Ser-244 is subject to Phosphoserine. Lys-307 carries the post-translational modification N6-acetyllysine. Thr-357 is subject to Phosphothreonine; by MELK. Phosphotyrosine; by SRC and INSR is present on residues Tyr-376 and Tyr-379. Ser-396 carries the post-translational modification Phosphoserine. Residue Ser-397 is modified to Phosphoserine; by MAP3K5. Residue Ser-399 is modified to Phosphoserine. Ser-401 is subject to Phosphoserine; by MAP3K5. At Ser-413 the chain carries Phosphoserine. The PH domain maps to 462–553; sequence KMGPVDKRKG…EVWRQQYQSN (92 aa). Ser-504 is subject to Phosphoserine; by PKC/PRKCQ. Thr-516 carries the phosphothreonine; by autocatalysis modification. A Phosphoserine; by PKC/PRKCQ modification is found at Ser-532.

This sequence belongs to the protein kinase superfamily. AGC Ser/Thr protein kinase family. PDPK1 subfamily. In terms of assembly, homodimer in its autoinhibited state. Active as monomer. Interacts with NPRL2, PAK1, PTK2B, GRB14, STRAP and IKKB. The Tyr-9 phosphorylated form interacts with SRC, RASA1 and CRK (via their SH2 domains). Interacts with SGK3 in a phosphorylation-dependent manner. The tyrosine-phosphorylated form interacts with PTPN6. The Ser-244 phosphorylated form interacts with YWHAH and YWHAQ. Binds INSR in response to insulin. Interacts (via PH domain) with SMAD3, SMAD4 and SMAD7. Interacts with PKN2; the interaction stimulates PDPK1 autophosphorylation, its PI(3,4,5)P3-dependent kinase activity toward 'Ser-473' of AKT1 but also activates its kinase activity toward PRKCD and PRKCZ. Interacts with PKN1 (via C-terminus) and PPARG. Post-translationally, phosphorylation on Ser-244 in the activation loop is required for full activity. PDPK1 itself can autophosphorylate Ser-244, leading to its own activation. Autophosphorylation is inhibited by the apoptotic C-terminus cleavage product of PKN2. Tyr-9 phosphorylation is critical for stabilization of both PDPK1 and the PDPK1/SRC complex via HSP90-mediated protection of PDPK1 degradation. Angiotensin II stimulates the tyrosine phosphorylation of PDPK1 in vascular smooth muscle in a calcium- and SRC-dependent manner. Phosphorylated on Tyr-9, Tyr-376 and Tyr-379 by INSR in response to insulin. Palmitate negatively regulates autophosphorylation at Ser-244 and palmitate-induced phosphorylation at Ser-532 and Ser-504 by PKC/PRKCQ negatively regulates its ability to phosphorylate PKB/AKT1. Phosphorylation at Thr-357 by MELK partially inhibits kinase activity, the inhibition is cooperatively enhanced by phosphorylation at Ser-397 and Ser-401 by MAP3K5. Monoubiquitinated in the kinase domain, deubiquitinated by USP4. As to expression, highly expressed in heart, brain, liver and testis, also expressed in embryonic cells.

The protein resides in the cytoplasm. Its subcellular location is the nucleus. It localises to the cell membrane. The protein localises to the cell junction. It is found in the focal adhesion. The catalysed reaction is L-seryl-[protein] + ATP = O-phospho-L-seryl-[protein] + ADP + H(+). The enzyme catalyses L-threonyl-[protein] + ATP = O-phospho-L-threonyl-[protein] + ADP + H(+). Its activity is regulated as follows. Homodimerization regulates its activity by maintaining the kinase in an autoinhibitory conformation. NPRL2 down-regulates its activity by interfering with tyrosine phosphorylation at the Tyr-9, Tyr-376 and Tyr-379 residues. The 14-3-3 protein YWHAQ acts as a negative regulator by association with the residues surrounding the Ser-244 residue. STRAP positively regulates its activity by enhancing its autophosphorylation and by stimulating its dissociation from YWHAQ. SMAD2, SMAD3, SMAD4 and SMAD7 also positively regulate its activity by stimulating its dissociation from YWHAQ. Activated by phosphorylation on Tyr-9, Tyr-376 and Tyr-379 by INSR in response to insulin. Serine/threonine kinase which acts as a master kinase, phosphorylating and activating a subgroup of the AGC family of protein kinases. Its targets include: protein kinase B (PKB/AKT1, PKB/AKT2, PKB/AKT3), p70 ribosomal protein S6 kinase (RPS6KB1), p90 ribosomal protein S6 kinase (RPS6KA1, RPS6KA2 and RPS6KA3), cyclic AMP-dependent protein kinase (PRKACA), protein kinase C (PRKCD and PRKCZ), serum and glucocorticoid-inducible kinase (SGK1, SGK2 and SGK3), p21-activated kinase-1 (PAK1), TSSK3, protein kinase PKN (PKN1 and PKN2). Plays a central role in the transduction of signals from insulin by providing the activating phosphorylation to PKB/AKT1, thus propagating the signal to downstream targets controlling cell proliferation and survival, as well as glucose and amino acid uptake and storage. Negatively regulates the TGF-beta-induced signaling by: modulating the association of SMAD3 and SMAD7 with TGF-beta receptor, phosphorylating SMAD2, SMAD3, SMAD4 and SMAD7, preventing the nuclear translocation of SMAD3 and SMAD4 and the translocation of SMAD7 from the nucleus to the cytoplasm in response to TGF-beta. Activates PPARG transcriptional activity and promotes adipocyte differentiation. Activates the NF-kappa-B pathway via phosphorylation of IKKB. The tyrosine phosphorylated form is crucial for the regulation of focal adhesions by angiotensin II. Controls proliferation, survival, and growth of developing pancreatic cells. Participates in the regulation of Ca(2+) entry and Ca(2+)-activated K(+) channels of mast cells. Essential for the motility of vascular endothelial cells (ECs) and is involved in the regulation of their chemotaxis. Plays a critical role in cardiac homeostasis by serving as a dual effector for cell survival and beta-adrenergic response. Plays an important role during thymocyte development by regulating the expression of key nutrient receptors on the surface of pre-T cells and mediating Notch-induced cell growth and proliferative responses. Provides negative feedback inhibition to toll-like receptor-mediated NF-kappa-B activation in macrophages. The chain is 3-phosphoinositide-dependent protein kinase 1 (Pdpk1) from Mus musculus (Mouse).